Reading from the N-terminus, the 448-residue chain is Arginine synthetase ArcE (448 aa).

Probably forms homotetramers and higher assemblies of tetramers. Mg(2+) is required as a cofactor.

The catalysed reaction is L-arginine + ADP + phosphate + H(+) = L-citrulline + NH4(+) + ATP. The protein operates within amino-acid biosynthesis; L-proline biosynthesis. It functions in the pathway amino-acid degradation; L-arginine degradation. It participates in amino-acid biosynthesis; L-arginine biosynthesis. Arginine deiminase involved in an arginine synthetase pathway, which provides citrulline and ornithine, the precursors for proline biosynthesis. Catalyzes the conversion of L-arginine to citrulline while conserving the energy of arginine deimination to generate ATP from ADP and free phosphate. Is specific toward L-arginine and cannot use D-arginine, agmatine, guanidine, L-alanine-L-arginine dipeptide and L-arginine-L-alanine dipeptide. Can also use CDP, GDP or UDP, with lower activity (38%, 8.4% and 13.3%, respectively). The enzyme can also catalyze the reverse reaction: the ATP-dependent generation of arginine from citrulline in a single reaction by using free ammonia, without the requirement of aspartic acid. In vivo, most likely functions in the arginine catabolism to produce citrulline for proline biosynthesis while also generating ATP, but it can also contribute to arginine biosynthesis when the necessary precursors such as citrulline are abundant. The protein is Arginine synthetase ArcE of Thermococcus kodakarensis (strain ATCC BAA-918 / JCM 12380 / KOD1) (Pyrococcus kodakaraensis (strain KOD1)).